Reading from the N-terminus, the 184-residue chain is UPF0301 protein RSKD131_2391 (184 aa).

This sequence belongs to the UPF0301 (AlgH) family.

The protein is UPF0301 protein RSKD131_2391 of Cereibacter sphaeroides (strain KD131 / KCTC 12085) (Rhodobacter sphaeroides).